A 388-amino-acid polypeptide reads, in one-letter code: Phosphopentomutase (388 aa).

Mn(2+) contacts are provided by Asp-9, Asp-283, His-288, Asp-324, His-325, and His-336.

It belongs to the phosphopentomutase family. Requires Mn(2+) as cofactor.

The protein localises to the cytoplasm. The enzyme catalyses 2-deoxy-alpha-D-ribose 1-phosphate = 2-deoxy-D-ribose 5-phosphate. The catalysed reaction is alpha-D-ribose 1-phosphate = D-ribose 5-phosphate. It participates in carbohydrate degradation; 2-deoxy-D-ribose 1-phosphate degradation; D-glyceraldehyde 3-phosphate and acetaldehyde from 2-deoxy-alpha-D-ribose 1-phosphate: step 1/2. Functionally, isomerase that catalyzes the conversion of deoxy-ribose 1-phosphate (dRib-1-P) and ribose 1-phosphate (Rib-1-P) to deoxy-ribose 5-phosphate (dRib-5-P) and ribose 5-phosphate (Rib-5-P), respectively. This chain is Phosphopentomutase, found in Deinococcus radiodurans (strain ATCC 13939 / DSM 20539 / JCM 16871 / CCUG 27074 / LMG 4051 / NBRC 15346 / NCIMB 9279 / VKM B-1422 / R1).